Here is a 68-residue protein sequence, read N- to C-terminus: MDQVMQFVEPSRQFVKDSIRLVKRCTKPDRKEFQKVAMATAIGFAIMGFIGFFVKLIHIPINNIIVGG.

Topologically, residues 1–32 (MDQVMQFVEPSRQFVKDSIRLVKRCTKPDRKE) are cytoplasmic. The helical transmembrane segment at 33 to 61 (FQKVAMATAIGFAIMGFIGFFVKLIHIPI) threads the bilayer. Topologically, residues 62-68 (NNIIVGG) are extracellular.

It belongs to the SecE/SEC61-gamma family. In terms of assembly, the SEC61 channel-forming translocon complex consists of channel-forming core components SEC61A1, SEC61B and SEC61G and different auxiliary components such as SEC62 and SEC63. The SEC61 channel associates with the multi-pass translocon (MPT) complex.

Its subcellular location is the endoplasmic reticulum membrane. Functionally, component of SEC61 channel-forming translocon complex that mediates transport of signal peptide-containing precursor polypeptides across the endoplasmic reticulum (ER). Forms a ribosome receptor and a gated pore in the ER membrane, both functions required for cotranslational translocation of nascent polypeptides. The SEC61 channel is also involved in ER membrane insertion of transmembrane proteins: it mediates membrane insertion of the first few transmembrane segments of proteins, while insertion of subsequent transmembrane regions of multi-pass membrane proteins is mediated by the multi-pass translocon (MPT) complex. The chain is Protein transport protein Sec61 subunit gamma (sec61g) from Harpagifer antarcticus (Antarctic spiny plunderfish).